We begin with the raw amino-acid sequence, 374 residues long: Queuine tRNA-ribosyltransferase (374 aa).

Catalysis depends on Asp90, which acts as the Proton acceptor. Residues 90-94 (DSGGF), Asp144, Gln193, and Gly220 each bind substrate. The RNA binding stretch occupies residues 251–257 (GVGTPED). The active-site Nucleophile is the Asp270. The interval 275 to 279 (TRNAR) is RNA binding; important for wobble base 34 recognition. Cys308, Cys310, Cys313, and His339 together coordinate Zn(2+).

The protein belongs to the queuine tRNA-ribosyltransferase family. As to quaternary structure, homodimer. Within each dimer, one monomer is responsible for RNA recognition and catalysis, while the other monomer binds to the replacement base PreQ1. Requires Zn(2+) as cofactor.

The enzyme catalyses 7-aminomethyl-7-carbaguanine + guanosine(34) in tRNA = 7-aminomethyl-7-carbaguanosine(34) in tRNA + guanine. The protein operates within tRNA modification; tRNA-queuosine biosynthesis. In terms of biological role, catalyzes the base-exchange of a guanine (G) residue with the queuine precursor 7-aminomethyl-7-deazaguanine (PreQ1) at position 34 (anticodon wobble position) in tRNAs with GU(N) anticodons (tRNA-Asp, -Asn, -His and -Tyr). Catalysis occurs through a double-displacement mechanism. The nucleophile active site attacks the C1' of nucleotide 34 to detach the guanine base from the RNA, forming a covalent enzyme-RNA intermediate. The proton acceptor active site deprotonates the incoming PreQ1, allowing a nucleophilic attack on the C1' of the ribose to form the product. After dissociation, two additional enzymatic reactions on the tRNA convert PreQ1 to queuine (Q), resulting in the hypermodified nucleoside queuosine (7-(((4,5-cis-dihydroxy-2-cyclopenten-1-yl)amino)methyl)-7-deazaguanosine). This chain is Queuine tRNA-ribosyltransferase, found in Campylobacter fetus subsp. fetus (strain 82-40).